The primary structure comprises 630 residues: Molybdenum cofactor biosynthesis protein 1 (630 aa).

The Radical SAM core domain maps to 61–298; it reads RFNRHHTYLR…SKTYHVPGFK (238 aa). R70 serves as a coordination point for GTP. C77 and C81 together coordinate [4Fe-4S] cluster. Position 83 (Y83) interacts with S-adenosyl-L-methionine. C84 serves as a coordination point for [4Fe-4S] cluster. Residue R120 coordinates GTP. S-adenosyl-L-methionine is bound at residue G124. T151 contributes to the GTP binding site. S-adenosyl-L-methionine is bound at residue S175. Position 212 (K212) interacts with GTP. M246 contributes to the S-adenosyl-L-methionine binding site. 2 residues coordinate [4Fe-4S] cluster: C312 and C315. 317–319 lines the GTP pocket; the sequence is RLR. [4Fe-4S] cluster is bound at residue C329. The interval 402–629 is molybdenum cofactor biosynthesis protein C; sequence KEVKNYLLKL…GGKSSSPQIT (228 aa). D599 functions as the For molybdenum cofactor biosynthesis protein C activity in the catalytic mechanism.

This sequence in the C-terminal section; belongs to the MoaC family. In the N-terminal section; belongs to the radical SAM superfamily. MoaA family. As to quaternary structure, isoform mocs1a and isoform mocs1b probably form a heterooligomer. [4Fe-4S] cluster is required as a cofactor.

It carries out the reaction GTP + AH2 + S-adenosyl-L-methionine = (8S)-3',8-cyclo-7,8-dihydroguanosine 5'-triphosphate + 5'-deoxyadenosine + L-methionine + A + H(+). The enzyme catalyses (8S)-3',8-cyclo-7,8-dihydroguanosine 5'-triphosphate = cyclic pyranopterin phosphate + diphosphate. The protein operates within cofactor biosynthesis; molybdopterin biosynthesis. Its function is as follows. Isoform mocs1a and isoform mocs1b probably form a complex that catalyzes the conversion of 5'-GTP to cyclic pyranopterin monophosphate (cPMP). mocs1a catalyzes the cyclization of GTP to (8S)-3',8-cyclo-7,8-dihydroguanosine 5'-triphosphate and mocs1b catalyzes the subsequent conversion of (8S)-3',8-cyclo-7,8-dihydroguanosine 5'-triphosphate to cPMP. This Dictyostelium discoideum (Social amoeba) protein is Molybdenum cofactor biosynthesis protein 1 (mocs1).